A 668-amino-acid polypeptide reads, in one-letter code: Neurexin-3-beta (668 aa).

Positions 1 to 35 (MHLRTNPSICPGRRPAWTLWMCSLFWGCIVSSVWS) are cleaved as a signal peptide. At 36–593 (SSNVASSASS…EVVRESSSTT (558 aa)) the chain is on the extracellular side. The 201-residue stretch at 84–284 (ATYIFGKSGG…NPNIKINGSV (201 aa)) folds into the Laminin G-like domain. The tract at residues 510 to 529 (TASSSTGMVPKLPAGKMNNR) is disordered. A helical transmembrane segment spans residues 594–614 (GMVVGIVAAAALCILILLYAM). Over 615–668 (YKYRNRDEGSYQVDETRNYISNSAQSNGTLMKEKQQSSKSGHKKQKNKDKEYYV) the chain is Cytoplasmic. A disordered region spans residues 636–668 (NSAQSNGTLMKEKQQSSKSGHKKQKNKDKEYYV).

Belongs to the neurexin family. In terms of processing, processed by alpha-secretase leading to the formation of an extracellular soluble protein as well as a C-terminal membrane-embedded fragment (CTF). Proteolysis of these CTFs by gamma-secretase releases intracellular domains (ICDs) and extracellular peptides. As to expression, brain and arteries (at protein level).

It localises to the membrane. In terms of biological role, neuronal cell surface protein that may be involved in cell recognition and cell adhesion. Plays a role in angiogenesis. This chain is Neurexin-3-beta (NRXN3), found in Gallus gallus (Chicken).